Consider the following 601-residue polypeptide: Kelch-like ECH-associated protein 1A (601 aa).

The BTB domain occupies 44-117; that stretch reads MDELRHHEML…VISRLIDFAY (74 aa). A BACK domain is found at 153-253; it reads KNLEPSNVIG…LNAVHIYALP (101 aa). Kelch repeat units lie at residues 292–337, 338–388, 389–435, 436–482, 484–529, and 530–576; these read PTPH…PCSG, LGAC…PRNR, VGVG…ARLG, AGVA…VRSG, GVVC…CRSA, and HGVS…GRSG.

It belongs to the KEAP1 family. As to quaternary structure, homodimer and heterodimer; heterodimerizes with keap1b. Component of the BCR(KEAP1) E3 ubiquitin ligase complex, at least composed of 2 molecules of cul3, 2 molecules of keap1 (keap1a and/or keap1b), and rbx1. Interacts with nfe2l2/nrf2; the interaction is direct. Non-enzymatic covalent modifications of reactive cysteines by electrophile metabolites inactivate the BCR(KEAP1) complex. As to expression, widely expressed.

It localises to the cytoplasm. Its subcellular location is the nucleus. It functions in the pathway protein modification; protein ubiquitination. Ubiquitin ligase activity of the BCR(KEAP1) complex is inhibited by oxidative stress and electrophile metabolites such as sulforaphane. Electrophile metabolites react with reactive cysteine residues in keap1 and trigger non-enzymatic covalent modifications of these cysteine residues, leading to inactivate the ubiquitin ligase activity of the BCR(KEAP1) complex. Substrate-specific adapter of a BCR (BTB-CUL3-RBX1) E3 ubiquitin ligase complex that regulates the response to oxidative stress by targeting nfe2l2/nrf2 for ubiquitination. Keap1 acts as a key sensor of oxidative and electrophilic stress: in normal conditions, the BCR(KEAP1) complex mediates ubiquitination and degradation of nfe2l2/nrf2, a transcription factor regulating expression of many cytoprotective genes. In response to oxidative stress, different electrophile metabolites trigger non-enzymatic covalent modifications of highly reactive cysteine residues in KEAP1, leading to inactivate the ubiquitin ligase activity of the BCR(KEAP1) complex, promoting nfe2l2/nrf2 nuclear accumulation and expression of phase II detoxifying enzymes. This Danio rerio (Zebrafish) protein is Kelch-like ECH-associated protein 1A.